The following is a 316-amino-acid chain: 4-hydroxy-3-methylbut-2-enyl diphosphate reductase (316 aa).

[4Fe-4S] cluster is bound at residue C12. The (2E)-4-hydroxy-3-methylbut-2-enyl diphosphate site is built by H41 and H74. Positions 41 and 74 each coordinate dimethylallyl diphosphate. Positions 41 and 74 each coordinate isopentenyl diphosphate. Residue C96 participates in [4Fe-4S] cluster binding. (2E)-4-hydroxy-3-methylbut-2-enyl diphosphate is bound at residue H124. A dimethylallyl diphosphate-binding site is contributed by H124. Residue H124 coordinates isopentenyl diphosphate. E126 acts as the Proton donor in catalysis. A (2E)-4-hydroxy-3-methylbut-2-enyl diphosphate-binding site is contributed by T169. C199 is a binding site for [4Fe-4S] cluster. S227, S228, N229, and S271 together coordinate (2E)-4-hydroxy-3-methylbut-2-enyl diphosphate. The dimethylallyl diphosphate site is built by S227, S228, N229, and S271. Residues S227, S228, N229, and S271 each contribute to the isopentenyl diphosphate site.

Belongs to the IspH family. The cofactor is [4Fe-4S] cluster.

The enzyme catalyses isopentenyl diphosphate + 2 oxidized [2Fe-2S]-[ferredoxin] + H2O = (2E)-4-hydroxy-3-methylbut-2-enyl diphosphate + 2 reduced [2Fe-2S]-[ferredoxin] + 2 H(+). The catalysed reaction is dimethylallyl diphosphate + 2 oxidized [2Fe-2S]-[ferredoxin] + H2O = (2E)-4-hydroxy-3-methylbut-2-enyl diphosphate + 2 reduced [2Fe-2S]-[ferredoxin] + 2 H(+). The protein operates within isoprenoid biosynthesis; dimethylallyl diphosphate biosynthesis; dimethylallyl diphosphate from (2E)-4-hydroxy-3-methylbutenyl diphosphate: step 1/1. Its pathway is isoprenoid biosynthesis; isopentenyl diphosphate biosynthesis via DXP pathway; isopentenyl diphosphate from 1-deoxy-D-xylulose 5-phosphate: step 6/6. Catalyzes the conversion of 1-hydroxy-2-methyl-2-(E)-butenyl 4-diphosphate (HMBPP) into a mixture of isopentenyl diphosphate (IPP) and dimethylallyl diphosphate (DMAPP). Acts in the terminal step of the DOXP/MEP pathway for isoprenoid precursor biosynthesis. The chain is 4-hydroxy-3-methylbut-2-enyl diphosphate reductase from Vibrio vulnificus (strain CMCP6).